Consider the following 161-residue polypeptide: Protein-export protein SecB (161 aa).

Belongs to the SecB family. In terms of assembly, homotetramer, a dimer of dimers. One homotetramer interacts with 1 SecA dimer.

It localises to the cytoplasm. Functionally, one of the proteins required for the normal export of preproteins out of the cell cytoplasm. It is a molecular chaperone that binds to a subset of precursor proteins, maintaining them in a translocation-competent state. It also specifically binds to its receptor SecA. The protein is Protein-export protein SecB of Coxiella burnetii (strain Dugway 5J108-111).